A 477-amino-acid polypeptide reads, in one-letter code: Myc-associated zinc finger protein (477 aa).

Disordered regions lie at residues 59 to 78 (AQSP…APAA) and 121 to 144 (TVDT…SAPA). The span at 130–140 (PPAPPPPPPAV) shows a compositional bias: pro residues. 4 consecutive C2H2-type zinc fingers follow at residues 190–212 (YICA…EAIH), 279–301 (HACE…KLSH), 307–329 (YQCP…VRSH), and 337–360 (YNCS…RQVH). Residue serine 361 is modified to Phosphoserine. The C2H2-type 5 zinc finger occupies 366–388 (FKCEKCEAAFATKDRLRAHTVRH). Residues 392–413 (VPCHVCGKMLSSAYISDHMKVH) form a C2H2-type 6; atypical zinc finger.

Interacts with BPTF. Expressed in Purkinje cells in the brain (at protein level).

Its subcellular location is the nucleus. In terms of biological role, transcriptional regulator. Acts as a transcriptional activator that binds to purine-rich GAGA sites found in the promoter of many genes including insulin I and II and islet amyloid polypeptide. This is Myc-associated zinc finger protein (Maz) from Mus musculus (Mouse).